A 416-amino-acid chain; its full sequence is (S)-ureidoglycine--glyoxylate transaminase (416 aa).

Lys-198 bears the N6-(pyridoxal phosphate)lysine mark.

The protein belongs to the class-V pyridoxal-phosphate-dependent aminotransferase family. In terms of assembly, homodimer. The cofactor is pyridoxal 5'-phosphate.

The enzyme catalyses (S)-2-ureidoglycine + glyoxylate = N-carbamoyl-2-oxoglycine + glycine. The protein operates within nitrogen metabolism; (S)-allantoin degradation. Catalyzes the transamination between an unstable intermediate ((S)-ureidoglycine) and the end product of purine catabolism (glyoxylate) to yield oxalurate and glycine. Glyoxylate is the preferred substrate, but other amino-group acceptors can be used. In Bacillus subtilis (strain 168), this protein is (S)-ureidoglycine--glyoxylate transaminase.